The primary structure comprises 440 residues: Beta-1,3-galactosyl-O-glycosyl-glycoprotein beta-1,6-N-acetylglucosaminyltransferase 3 (440 aa).

Topologically, residues 1-12 (MKMTGWKKKLCR) are cytoplasmic. Residues 13–30 (GHHLWALGCYSLLAVVAL) traverse the membrane as a helical; Signal-anchor for type II membrane protein segment. Over 31–440 (RLSLRLKCDV…RHKAIYGTEL (410 aa)) the chain is Lumenal. Cystine bridges form between cysteine 73/cysteine 230, cysteine 164/cysteine 384, cysteine 185/cysteine 212, and cysteine 393/cysteine 425. A glycan (N-linked (GlcNAc...) asparagine) is linked at asparagine 108.

Belongs to the glycosyltransferase 14 family. N-glycosylated.

The protein localises to the golgi apparatus membrane. It carries out the reaction a 3-O-[beta-D-galactosyl-(1-&gt;3)-N-acetyl-alpha-D-galactosaminyl]-L-seryl-[protein] + UDP-N-acetyl-alpha-D-glucosamine = 3-O-{beta-D-galactosyl-(1-&gt;3)-[N-acetyl-beta-D-glucosaminyl-(1-&gt;6)]-N-acetyl-alpha-D-galactosaminyl}-L-seryl-[protein] + UDP + H(+). The enzyme catalyses a 3-O-[beta-D-galactosyl-(1-&gt;3)-N-acetyl-alpha-D-galactosaminyl]-L-threonyl-[protein] + UDP-N-acetyl-alpha-D-glucosamine = a 3-O-{beta-D-galactosyl-(1-&gt;3)-[N-acetyl-beta-D-glucosaminyl-(1-&gt;6)]-N-acetyl-alpha-D-galactosaminyl}-L-threonyl-[protein] + UDP + H(+). It catalyses the reaction a beta-D-Gal-(1-&gt;4)-beta-D-GlcNAc-(1-&gt;3)-beta-D-Gal-(1-&gt;4)-beta-D-GlcNAc derivative + UDP-N-acetyl-alpha-D-glucosamine = a beta-D-Gal-(1-&gt;4)-beta-D-GlcNAc-(1-&gt;3)-[beta-D-GlcNAc-(1-&gt;6)]-beta-D-Gal-(1-&gt;4)-N-acetyl-beta-D-glucosaminyl derivative + UDP + H(+). The catalysed reaction is 3-O-[N-acetyl-beta-D-glucosaminyl-(1-&gt;3)-N-acetyl-alpha-D-galactosaminyl]-L-seryl-[protein] + UDP-N-acetyl-alpha-D-glucosamine = 3-O-[N-acetyl-beta-D-glucosaminyl-(1-&gt;3)-[N-acetyl-beta-D-glucosaminyl-(1-&gt;6)]-N-acetyl-alpha-D-galactosaminyl]-L-seryl-[protein] + UDP + H(+). It carries out the reaction a 3-O-[N-acetyl-beta-D-glucosaminyl-(1-&gt;3)-N-acetyl-alpha-D-galactosaminyl]-L-threonyl-[protein] + UDP-N-acetyl-alpha-D-glucosamine = 3-O-[N-acetyl-beta-D-glucosaminyl-(1-&gt;3)-[N-acetyl-beta-D-glucosaminyl-(1-&gt;6)]-N-acetyl-alpha-D-galactosaminyl]-L-threonyl-[protein] + UDP + H(+). It participates in protein modification; protein glycosylation. In terms of biological role, glycosyltransferase that can synthesize all known mucin beta 6 N-acetylglucosaminides. Mediates core 2 and core 4 O-glycan branching, 2 important steps in mucin-type biosynthesis. Also has I-branching enzyme activity by converting linear into branched poly-N-acetyllactosaminoglycans, leading to introduce the blood group I antigen during embryonic development. This Bos mutus grunniens (Wild yak) protein is Beta-1,3-galactosyl-O-glycosyl-glycoprotein beta-1,6-N-acetylglucosaminyltransferase 3 (GCNT3).